Here is a 441-residue protein sequence, read N- to C-terminus: Serine/threonine-protein kinase prk-2 (441 aa).

The region spanning 31–285 is the Protein kinase domain; it reads YKLKAELGRG…LEAILNHPWV (255 aa). ATP contacts are provided by residues 37 to 45 and Lys-60; that span reads LGRGGFGVV. Asp-158 acts as the Proton acceptor in catalysis. The disordered stretch occupies residues 301 to 364; it reads QKKTSESSDD…NQKKPNHKEF (64 aa). Residues 303–320 are compositionally biased toward basic and acidic residues; that stretch reads KTSESSDDHHSETLGDHS. Residues 328-338 are compositionally biased toward polar residues; it reads PPTSSVSQQPG.

Belongs to the protein kinase superfamily. Ser/Thr protein kinase family. PIM subfamily. It depends on Mg(2+) as a cofactor.

It catalyses the reaction L-seryl-[protein] + ATP = O-phospho-L-seryl-[protein] + ADP + H(+). It carries out the reaction L-threonyl-[protein] + ATP = O-phospho-L-threonyl-[protein] + ADP + H(+). Involved in the negative regulation of synaptic differentiation in PLM neurons. This chain is Serine/threonine-protein kinase prk-2, found in Caenorhabditis elegans.